The sequence spans 949 residues: MFGFQRRGLGTPRLQLWLLLLEFWEVGSGQLHYSVSEEAKHGTFVGRIAQDLGLELAELVPRLFRVASKTHGDLLEVNLQNGILFVNSRIDREELCGQSAECSIHLEVIVDRPLQVFHVNVEVKDINDNPPVFSLREQKLLIAESKQSDSRFPLEGASDADIEENALLTYRLSKNEYFSLDSPTNGKQIKRLSLILKKSLDREKTPELNLMVTATDGGKPELTGTVRLLVQVLDVNDNDPDFDKSEYKVSLMENAAKETLVLKLNATDRDEGVNGEVTYSLMSIKPNGRHLFTLDQNNGEVRVNGTLDYEENKFYKIEVQATDKGTPPMAGHCTVWVEILDTNDNSPEVAVTSLSLPVREDAQPSTVIALISVSDRDSGVNGQVTCSLTPHVPFKLVSTFKNYYSLVLDSALDRESVWAYELVVTARDGGSPSLWATARVSVEVADVNDNAPAFAQPEYTVFVKENNPPGCHIFTVSARDADAQENALVSYSLVERRLGDRALSSYVSVHAESGKVYALQPLDHEELELLQFQVSARDAGVPPLGSNVTLQVFVLDENDNAPALLATQAGSAGGAVNKLVPRSVGAGHVVAKVRAVDADSGYNAWLSYELQPAAGGSRIPFRVGLYTGEISTTRALDEADSPRHRLLVLVKDHGEPALTATATVLVSLVESGQAPKASSRTLVGAASPEAALVDVNVYLIIAICVVSSLLVLTLLLYTALWCSATPTEGACAPGKPTLVCSRAVGSWSYSQQRRQRVCSEEGPPKTDLMAFSPSLPLGLNKEEEGERQEPGSNHPGQPRQPNPDWRYSASLRAGMHSSVHLEEAGILRAGPGGPDQQWPTVSSATPEPEAGEVSPPVGAGVNSNSWTFKYGPGNPKQSGPGELPDKFIIPGSPAIISIRQEPANSQIDKSDFITFGKKEETKKKKKKKKGNKTQEKKEKGNSTTDNSDQ.

The first 29 residues, 1-29 (MFGFQRRGLGTPRLQLWLLLLEFWEVGSG), serve as a signal peptide directing secretion. Cadherin domains lie at 30–133 (QLHY…PPVF), 157–242 (ASDA…DPDF), 243–349 (DKSE…SPEV), 350–454 (AVTS…APAF), 455–564 (AQPE…APAL), and 580–677 (VPRS…APKA). Topologically, residues 30–696 (QLHYSVSEEA…SPEAALVDVN (667 aa)) are extracellular. N-linked (GlcNAc...) asparagine glycosylation is found at asparagine 265 and asparagine 304. N-linked (GlcNAc...) asparagine glycosylation is present at asparagine 547. The helical transmembrane segment at 697-717 (VYLIIAICVVSSLLVLTLLLY) threads the bilayer. Residues 718-949 (TALWCSATPT…GNSTTDNSDQ (232 aa)) lie on the Cytoplasmic side of the membrane. 2 PXXP repeats span residues 733-736 (PGKP) and 773-776 (PSLP). The interval 733–893 (PGKPTLVCSR…PDKFIIPGSP (161 aa)) is 6 X 4 AA repeats of P-X-X-P. Disordered stretches follow at residues 753 to 807 (RRQR…DWRY), 826 to 858 (ILRAGPGGPDQQWPTVSSATPEPEAGEVSPPVG), and 870 to 889 (YGPGNPKQSGPGELPDKFII). The span at 780–789 (NKEEEGERQE) shows a compositional bias: basic and acidic residues. 4 PXXP repeats span residues 795–798 (PGQP), 831–834 (PGGP), 872–875 (PGNP), and 890–893 (PGSP). The segment at 900–949 (QEPANSQIDKSDFITFGKKEETKKKKKKKKGNKTQEKKEKGNSTTDNSDQ) is disordered. Positions 908–922 (DKSDFITFGKKEETK) are enriched in basic and acidic residues.

The protein localises to the cell membrane. Its function is as follows. Potential calcium-dependent cell-adhesion protein. May be involved in the establishment and maintenance of specific neuronal connections in the brain. This Pan troglodytes (Chimpanzee) protein is Protocadherin alpha-11 (PCDHA11).